The following is an 819-amino-acid chain: Leucine--tRNA ligase (819 aa).

The short motif at 40-51 is the 'HIGH' region element; that stretch reads PYPSGAGLHVGH. The 'KMSKS' region signature appears at 600–604; that stretch reads KMSKS. Lysine 603 is an ATP binding site.

This sequence belongs to the class-I aminoacyl-tRNA synthetase family.

It localises to the cytoplasm. It carries out the reaction tRNA(Leu) + L-leucine + ATP = L-leucyl-tRNA(Leu) + AMP + diphosphate. The protein is Leucine--tRNA ligase of Chlamydia trachomatis serovar D (strain ATCC VR-885 / DSM 19411 / UW-3/Cx).